Consider the following 81-residue polypeptide: Sulfur carrier protein TusA (81 aa).

Catalysis depends on Cys-19, which acts as the Cysteine persulfide intermediate.

Belongs to the sulfur carrier protein TusA family. In terms of assembly, interacts with IscS.

It is found in the cytoplasm. Its pathway is tRNA modification. Sulfur carrier protein involved in sulfur trafficking in the cell. Part of a sulfur-relay system required for 2-thiolation during synthesis of 2-thiouridine of the modified wobble base 5-methylaminomethyl-2-thiouridine (mnm(5)s(2)U) in tRNA. Interacts with IscS and stimulates its cysteine desulfurase activity. Accepts an activated sulfur from IscS, which is then transferred to TusD, and thus determines the direction of sulfur flow from IscS to 2-thiouridine formation. Also appears to be involved in sulfur transfer for the biosynthesis of molybdopterin. This is Sulfur carrier protein TusA from Cronobacter sakazakii (strain ATCC BAA-894) (Enterobacter sakazakii).